We begin with the raw amino-acid sequence, 1253 residues long: Cytoplasmic FMR1-interacting protein 2 (1253 aa).

This sequence belongs to the CYFIP family.

Its subcellular location is the cytoplasm. Functionally, involved in T-cell adhesion and p53-dependent induction of apoptosis. Does not bind RNA. The protein is Cytoplasmic FMR1-interacting protein 2 (cyfip2) of Xenopus laevis (African clawed frog).